The following is a 438-amino-acid chain: Coenzyme A disulfide reductase (438 aa).

FAD is bound at residue 8–33 (GAVAGGATCASQIRRLDKESDIIIFE). Substrate is bound by residues Thr-15, Gln-19, Arg-22, Ser-39, and Asn-42. Residue Cys-43 is the Nucleophile of the active site. Catalysis depends on Cys-43, which acts as the Redox-active. Substrate is bound at residue Lys-71. 151-166 (VLVVGAGYVSLEVLEN) serves as a coordination point for NADP(+). Position 267–277 (267–277 (TNVPNIYAIGD)) interacts with FAD. His-299 is a binding site for substrate. Position 419 (Tyr-419) interacts with FAD. Lys-427 provides a ligand contact to substrate.

This sequence belongs to the class-III pyridine nucleotide-disulfide oxidoreductase family. Homodimer. FAD is required as a cofactor.

It catalyses the reaction NADP(+) + 2 CoA = CoA-disulfide + NADPH + H(+). In terms of biological role, catalyzes specifically the NADPH-dependent reduction of coenzyme A disulfide. Is also active with other disulfide substrates containing at least one 4'-phosphopantethienyl moiety such as 4,4'-diphosphopantethine, but is not able to reduce oxidized glutathione, cystine, pantethine, or H(2)O(2). The chain is Coenzyme A disulfide reductase (cdr) from Staphylococcus aureus (strain NCTC 8325 / PS 47).